The chain runs to 292 residues: MSLIDWFAARRKDQFVGKVSQDPEESDGLWVKCSECGQVAYRKDLISNFNVCSNCGHHNRINSDERINIIADKDSFKEFDESLSPTDPLKFKDRRSYSERIKESQQGTGLKDGVITGLCSVNSMPLALAVMDFRFMGGSMGSVVGEKITRIVETATIKNYPILIVCASGGARMQEGMLSLMQMAKISGALKKHRAKNLLYMPLLTHPTTGGVTASFAMLGDLILAEPKALIGFAGRRVIEQTLREKLPDNFQTAEYLLEHGFVDVIVNRKELKSTLTKLLKIHGVKELVQTN.

The 264-residue stretch at 29–292 (LWVKCSECGQ…HGVKELVQTN (264 aa)) folds into the CoA carboxyltransferase N-terminal domain. Cysteine 33, cysteine 36, cysteine 52, and cysteine 55 together coordinate Zn(2+). Residues 33–55 (CSECGQVAYRKDLISNFNVCSNC) form a C4-type zinc finger.

It belongs to the AccD/PCCB family. In terms of assembly, acetyl-CoA carboxylase is a heterohexamer composed of biotin carboxyl carrier protein (AccB), biotin carboxylase (AccC) and two subunits each of ACCase subunit alpha (AccA) and ACCase subunit beta (AccD). Requires Zn(2+) as cofactor.

The protein resides in the cytoplasm. The catalysed reaction is N(6)-carboxybiotinyl-L-lysyl-[protein] + acetyl-CoA = N(6)-biotinyl-L-lysyl-[protein] + malonyl-CoA. It functions in the pathway lipid metabolism; malonyl-CoA biosynthesis; malonyl-CoA from acetyl-CoA: step 1/1. In terms of biological role, component of the acetyl coenzyme A carboxylase (ACC) complex. Biotin carboxylase (BC) catalyzes the carboxylation of biotin on its carrier protein (BCCP) and then the CO(2) group is transferred by the transcarboxylase to acetyl-CoA to form malonyl-CoA. This Prochlorococcus marinus subsp. pastoris (strain CCMP1986 / NIES-2087 / MED4) protein is Acetyl-coenzyme A carboxylase carboxyl transferase subunit beta.